Here is a 243-residue protein sequence, read N- to C-terminus: DNA repair protein RecO (243 aa).

Belongs to the RecO family.

Involved in DNA repair and RecF pathway recombination. This Xylella fastidiosa (strain M12) protein is DNA repair protein RecO.